The primary structure comprises 465 residues: MASQLTQRGALFLLFFLTPAVTPTWYAGSGYYPDESYNEVYAEEVPQAPALDYRVPRWCYTLNIQDGEATCYSPKGGNYHSSLGTRCELSCDRGFRLIGRRSVQCLPSRRWSGTAYCRQMRCHALPFITSGTYTCTNGVLLDSRCDYSCSSGYHLEGDRSRICMEDGRWSGGEPVCVDIDPPKIRCPHSREKMAEPEKLTARVYWDPPLVKDSADGTITRVTLRGPEPGSHFPEGEHVIRYTAYDRAYNRASCKFIVKVQVRRCPTLKPPQHGYLTCTSAGDNYGATCEYHCDGGYDRQGTPSRVCQSSRQWSGSPPICAPMKINVNVNSAAGLLDQFYEKQRLLIISAPDPSNRYYKMQISMLQQSTCGLDLRHVTIIELVGQPPQEVGRIREQQLSANIIEELRQFQRLTRSYFNMVLIDKQGIDRDRYMEPVTPEEIFTFIDDYLLSNQELTQRREQRDICE.

Residues 1–23 (MASQLTQRGALFLLFFLTPAVTP) form the signal peptide. Sushi domains follow at residues 69-119 (ATCY…YCRQ), 120-178 (MRCH…VCVD), and 262-321 (RRCP…ICAP). 4 cysteine pairs are disulfide-bonded: cysteine 71/cysteine 105, cysteine 91/cysteine 117, cysteine 122/cysteine 163, and cysteine 149/cysteine 176. Residues 177 to 261 (VDIDPPKIRC…SCKFIVKVQV (85 aa)) form the HYR domain. 2 disulfide bridges follow: cysteine 264/cysteine 306 and cysteine 292/cysteine 319.

In terms of assembly, forms homooligomers. Interacts with PLAUR (via the UPAR/Ly6 domains), ADAMTS4 and CTSB. Interacts with HGF; the interaction increases the mitogenic activity of HGF. Contains chondroitin sulfate chains. Expressed in neurons of the rolandic area of the brain (at protein level). Highly expressed in the brain, placenta, lung, trachea, uterus, adrenal gland, heart, ovary and placenta. Weakly expressed in the peripheral blood, brain and bone marrow. Expressed in numerous cancer cell lines and in gastrointestinal cancer cells. Higher levels found in colorectal cancers than in normal colonic mucosa.

The protein localises to the secreted. It is found in the cytoplasm. The protein resides in the cell surface. It localises to the synapse. Acts as a ligand for the urokinase plasminogen activator surface receptor. Plays a role in angiogenesis by inducing endothelial cell migration and the formation of vascular network (cords). Involved in cellular migration and adhesion. Increases the phosphorylation levels of FAK. Interacts with and increases the mitogenic activity of HGF. Promotes synapse formation. May have a role in the perisylvian region, critical for language and cognitive development. This is Sushi repeat-containing protein SRPX2 (SRPX2) from Homo sapiens (Human).